The following is a 469-amino-acid chain: Mannosyl-oligosaccharide 1,2-alpha-mannosidase IA (469 aa).

Residues 1-469 (REPADAAVRE…DQKEVEVKVK (469 aa)) are Lumenal-facing. An intrachain disulfide couples cysteine 292 to cysteine 324. N-linked (GlcNAc...) asparagine glycosylation occurs at asparagine 329. Glutamate 338 serves as the catalytic Proton donor. Position 449 (threonine 449) interacts with Ca(2+).

It belongs to the glycosyl hydrolase 47 family. Requires Ca(2+) as cofactor.

It localises to the golgi apparatus membrane. The enzyme catalyses N(4)-(alpha-D-Man-(1-&gt;2)-alpha-D-Man-(1-&gt;2)-alpha-D-Man-(1-&gt;3)-[alpha-D-Man-(1-&gt;2)-alpha-D-Man-(1-&gt;3)-[alpha-D-Man-(1-&gt;2)-alpha-D-Man-(1-&gt;6)]-alpha-D-Man-(1-&gt;6)]-beta-D-Man-(1-&gt;4)-beta-D-GlcNAc-(1-&gt;4)-beta-D-GlcNAc)-L-asparaginyl-[protein] (N-glucan mannose isomer 9A1,2,3B1,2,3) + 4 H2O = N(4)-(alpha-D-Man-(1-&gt;3)-[alpha-D-Man-(1-&gt;3)-[alpha-D-Man-(1-&gt;6)]-alpha-D-Man-(1-&gt;6)]-beta-D-Man-(1-&gt;4)-beta-D-GlcNAc-(1-&gt;4)-beta-D-GlcNAc)-L-asparaginyl-[protein] (N-glucan mannose isomer 5A1,2) + 4 beta-D-mannose. It catalyses the reaction N(4)-(alpha-D-Man-(1-&gt;2)-alpha-D-Man-(1-&gt;2)-alpha-D-Man-(1-&gt;3)-[alpha-D-Man-(1-&gt;3)-[alpha-D-Man-(1-&gt;2)-alpha-D-Man-(1-&gt;6)]-alpha-D-Man-(1-&gt;6)]-beta-D-Man-(1-&gt;4)-beta-D-GlcNAc-(1-&gt;4)-beta-D-GlcNAc)-L-asparaginyl-[protein] (N-glucan mannose isomer 8A1,2,3B1,3) + 3 H2O = N(4)-(alpha-D-Man-(1-&gt;3)-[alpha-D-Man-(1-&gt;3)-[alpha-D-Man-(1-&gt;6)]-alpha-D-Man-(1-&gt;6)]-beta-D-Man-(1-&gt;4)-beta-D-GlcNAc-(1-&gt;4)-beta-D-GlcNAc)-L-asparaginyl-[protein] (N-glucan mannose isomer 5A1,2) + 3 beta-D-mannose. Its pathway is protein modification; protein glycosylation. Inhibited by both 1-deoxymannojirimycin and kifunensine. Involved in the maturation of Asn-linked oligosaccharides. Progressively trim alpha-1,2-linked mannose residues from Man(9)GlcNAc(2) to produce Man(5)GlcNAc(2). The sequence is that of Mannosyl-oligosaccharide 1,2-alpha-mannosidase IA (MAN1A1) from Oryctolagus cuniculus (Rabbit).